Consider the following 324-residue polypeptide: Phospho-N-acetylmuramoyl-pentapeptide-transferase (324 aa).

Transmembrane regions (helical) follow at residues 5 to 25 (VILF…PILI), 50 to 70 (GTPT…TIVM), 77 to 97 (ISPE…LGFL), 117 to 137 (LIGQ…YNFA), 147 to 167 (LSFD…VGGS), 176 to 196 (LDGL…ILAW), 203 to 223 (VAIF…FNAH), 227 to 247 (VFMG…IAIL), 250 to 270 (LEIL…SVIL), and 302 to 322 (VVVT…YIEV).

The protein belongs to the glycosyltransferase 4 family. MraY subfamily. Mg(2+) is required as a cofactor.

It localises to the cell membrane. The catalysed reaction is UDP-N-acetyl-alpha-D-muramoyl-L-alanyl-gamma-D-glutamyl-meso-2,6-diaminopimeloyl-D-alanyl-D-alanine + di-trans,octa-cis-undecaprenyl phosphate = di-trans,octa-cis-undecaprenyl diphospho-N-acetyl-alpha-D-muramoyl-L-alanyl-D-glutamyl-meso-2,6-diaminopimeloyl-D-alanyl-D-alanine + UMP. Its pathway is cell wall biogenesis; peptidoglycan biosynthesis. Its function is as follows. Catalyzes the initial step of the lipid cycle reactions in the biosynthesis of the cell wall peptidoglycan: transfers peptidoglycan precursor phospho-MurNAc-pentapeptide from UDP-MurNAc-pentapeptide onto the lipid carrier undecaprenyl phosphate, yielding undecaprenyl-pyrophosphoryl-MurNAc-pentapeptide, known as lipid I. This Bacillus subtilis (strain 168) protein is Phospho-N-acetylmuramoyl-pentapeptide-transferase.